The sequence spans 525 residues: Estrogen receptor (525 aa).

Residues 1 to 59 (PTSPLVFVPSSPRLSPFMHPPSHHYLETTSTPVYRSSVSSSQQQLSREDQCGTSDDSYS) are disordered. The modulating stretch occupies residues 1 to 82 (PTSPLVFVPS…GFEMAKEMRF (82 aa)). The segment covering 36–45 (SSVSSSQQQL) has biased composition (low complexity). 2 consecutive NR C4-type zinc fingers follow at residues 83-103 (CAVCSDYASGYDYGVWSCEGC) and 119-143 (CPATNQCTIDRNRRKSCQACRLRKC). A DNA-binding region (nuclear receptor) is located at residues 83 to 148 (CAVCSDYASG…RLRKCYQVGM (66 aa)). A hinge region spans residues 149–209 (MKGGVRKDRG…GGGKSSIIGM (61 aa)). Residues 154–182 (RKDRGRVLRRDKRRTGTSDKASKDLEHRT) are compositionally biased toward basic and acidic residues. Residues 154-203 (RKDRGRVLRRDKRRTGTSDKASKDLEHRTAPPQDRRKHSSSSSSAGGGGK) form a disordered region. The 237-residue stretch at 210–446 (SPDQVLLLLQ…DLLLEMLDAH (237 aa)) folds into the NR LBD domain. The segment covering 452-465 (DRPAESWSQADREP) has biased composition (basic and acidic residues). Residues 452-525 (DRPAESWSQA…GPRSDCTHIL (74 aa)) form a disordered region. Over residues 479 to 493 (SGGGDGGPSSAGSGS) the composition is skewed to gly residues.

This sequence belongs to the nuclear hormone receptor family. NR3 subfamily. In terms of assembly, binds DNA as a homodimer. Can form a heterodimer with ER-beta. As to expression, abundant in the liver, less abundant in the testes and barely detectable in the ovary and brain.

It localises to the nucleus. Functionally, the steroid hormones and their receptors are involved in the regulation of eukaryotic gene expression and affect cellular proliferation and differentiation in target tissues. This chain is Estrogen receptor (esr1), found in Micropogonias undulatus (Atlantic croaker).